We begin with the raw amino-acid sequence, 207 residues long: MTQSQALRVGIGGPVGSGKTALTLALCRALRDKYNIAVVTNDIYTAEDAQFLVRNEALAPDRIIGVETGGCPHTAIREDASINLEAVDRLNQRFPGLEIIFVESGGDNLAATFSPELSDLTLYVIDVSAGDKIPRKGGPGITKSDLLVINKIDLAPMVGASLEVMDRDARKMRGERPFIFSNLKTGQGLAEIIAFIETQGLLRPHAG.

Residue 13 to 20 participates in GTP binding; sequence GPVGSGKT.

It belongs to the SIMIBI class G3E GTPase family. UreG subfamily. Homodimer. UreD, UreF and UreG form a complex that acts as a GTP-hydrolysis-dependent molecular chaperone, activating the urease apoprotein by helping to assemble the nickel containing metallocenter of UreC. The UreE protein probably delivers the nickel.

It is found in the cytoplasm. Functionally, facilitates the functional incorporation of the urease nickel metallocenter. This process requires GTP hydrolysis, probably effectuated by UreG. This chain is Urease accessory protein UreG, found in Azoarcus sp. (strain BH72).